A 361-amino-acid chain; its full sequence is Queuine tRNA-ribosyltransferase (361 aa).

Asp92 acts as the Proton acceptor in catalysis. Substrate-binding positions include 92–96 (DSGGF), Asp146, Gln189, and Gly216. The tract at residues 247 to 253 (GVGKPAD) is RNA binding. The active-site Nucleophile is the Asp266. The interval 271–275 (TRAGR) is RNA binding; important for wobble base 34 recognition. Residues Cys304, Cys306, Cys309, and His335 each contribute to the Zn(2+) site.

Belongs to the queuine tRNA-ribosyltransferase family. As to quaternary structure, homodimer. Within each dimer, one monomer is responsible for RNA recognition and catalysis, while the other monomer binds to the replacement base PreQ1. Zn(2+) serves as cofactor.

The catalysed reaction is 7-aminomethyl-7-carbaguanine + guanosine(34) in tRNA = 7-aminomethyl-7-carbaguanosine(34) in tRNA + guanine. The protein operates within tRNA modification; tRNA-queuosine biosynthesis. In terms of biological role, catalyzes the base-exchange of a guanine (G) residue with the queuine precursor 7-aminomethyl-7-deazaguanine (PreQ1) at position 34 (anticodon wobble position) in tRNAs with GU(N) anticodons (tRNA-Asp, -Asn, -His and -Tyr). Catalysis occurs through a double-displacement mechanism. The nucleophile active site attacks the C1' of nucleotide 34 to detach the guanine base from the RNA, forming a covalent enzyme-RNA intermediate. The proton acceptor active site deprotonates the incoming PreQ1, allowing a nucleophilic attack on the C1' of the ribose to form the product. After dissociation, two additional enzymatic reactions on the tRNA convert PreQ1 to queuine (Q), resulting in the hypermodified nucleoside queuosine (7-(((4,5-cis-dihydroxy-2-cyclopenten-1-yl)amino)methyl)-7-deazaguanosine). The protein is Queuine tRNA-ribosyltransferase of Rickettsia massiliae (strain Mtu5).